The primary structure comprises 147 residues: uncharacterized protein (147 aa).

The Rhodanese domain occupies 52–145; that stretch reads YDRCLLIIDA…WLSNNYPTVC (94 aa).

This is an uncharacterized protein from Buchnera aphidicola subsp. Baizongia pistaciae (strain Bp).